The primary structure comprises 89 residues: Small ribosomal subunit protein uS15 (89 aa).

Belongs to the universal ribosomal protein uS15 family. In terms of assembly, part of the 30S ribosomal subunit. Forms a bridge to the 50S subunit in the 70S ribosome, contacting the 23S rRNA.

Its function is as follows. One of the primary rRNA binding proteins, it binds directly to 16S rRNA where it helps nucleate assembly of the platform of the 30S subunit by binding and bridging several RNA helices of the 16S rRNA. In terms of biological role, forms an intersubunit bridge (bridge B4) with the 23S rRNA of the 50S subunit in the ribosome. The protein is Small ribosomal subunit protein uS15 of Haemophilus influenzae (strain 86-028NP).